Here is a 222-residue protein sequence, read N- to C-terminus: Glutathione S-transferase A3 (222 aa).

The residue at position 2 (alanine 2) is an N-acetylalanine. One can recognise a GST N-terminal domain in the interval glycine 3–glycine 83. Lysine 4 is subject to N6-succinyllysine. Glutathione contacts are provided by residues tyrosine 9, arginine 45, glutamine 54–valine 55, and glutamine 67–threonine 68. Residues aspartate 85–proline 207 form the GST C-terminal domain.

This sequence belongs to the GST superfamily. Alpha family. Homodimer.

It is found in the cytoplasm. The catalysed reaction is RX + glutathione = an S-substituted glutathione + a halide anion + H(+). It carries out the reaction androst-5-ene-3,17-dione = androst-4-ene-3,17-dione. It catalyses the reaction pregn-5-ene-3,20-dione = progesterone. In terms of biological role, conjugation of reduced glutathione to a wide number of exogenous and endogenous hydrophobic electrophiles. Catalyzes isomerization reactions that contribute to the biosynthesis of steroid hormones. Efficiently catalyze obligatory double-bond isomerizations of delta(5)-androstene-3,17-dione and delta(5)-pregnene-3,20-dione, precursors to testosterone and progesterone, respectively. Has substantial activity toward aflatoxin B1-8,9-epoxide. This chain is Glutathione S-transferase A3, found in Homo sapiens (Human).